We begin with the raw amino-acid sequence, 278 residues long: Ribonuclease HII (278 aa).

The 189-residue stretch at 71–259 (WPVAGCDEAG…VAAAWDKHAP (189 aa)) folds into the RNase H type-2 domain. Residues Asp77, Glu78, and Asp168 each contribute to the a divalent metal cation site.

It belongs to the RNase HII family. Mn(2+) is required as a cofactor. The cofactor is Mg(2+).

The protein localises to the cytoplasm. The catalysed reaction is Endonucleolytic cleavage to 5'-phosphomonoester.. In terms of biological role, endonuclease that specifically degrades the RNA of RNA-DNA hybrids. In Rhodopseudomonas palustris (strain BisA53), this protein is Ribonuclease HII.